Reading from the N-terminus, the 258-residue chain is Small ribosomal subunit protein uS2 (258 aa).

A disordered region spans residues 226 to 258 (AQNKDVEPVADKDEKPEAAPVDEAETATETTGE). Basic and acidic residues predominate over residues 229–242 (KDVEPVADKDEKPE). A compositionally biased stretch (acidic residues) spans 245–258 (PVDEAETATETTGE).

The protein belongs to the universal ribosomal protein uS2 family.

The polypeptide is Small ribosomal subunit protein uS2 (Solidesulfovibrio magneticus (strain ATCC 700980 / DSM 13731 / RS-1) (Desulfovibrio magneticus)).